A 538-amino-acid chain; its full sequence is NADH-quinone oxidoreductase subunit N (538 aa).

Helical transmembrane passes span 28 to 48 (LAPV…EAFV), 57 to 77 (QIIV…TTIA), 94 to 114 (PTLA…VLFA), 147 to 167 (HTEV…FAAA), 170 to 190 (LIMM…LCGM), 206 to 226 (FLLG…LYGC), 249 to 269 (IVAG…AVPF), 288 to 308 (MAVA…YVGL), 315 to 335 (WQIV…IVGL), 343 to 363 (LLAY…VGAW), 380 to 400 (VLVY…LILM), 424 to 444 (IGVL…TAGF), 458 to 478 (GYAW…AFYL), and 503 to 523 (IAGW…GVAP).

It belongs to the complex I subunit 2 family. NDH-1 is composed of 14 different subunits. Subunits NuoA, H, J, K, L, M, N constitute the membrane sector of the complex.

It is found in the cell membrane. It catalyses the reaction a quinone + NADH + 5 H(+)(in) = a quinol + NAD(+) + 4 H(+)(out). Its function is as follows. NDH-1 shuttles electrons from NADH, via FMN and iron-sulfur (Fe-S) centers, to quinones in the respiratory chain. The immediate electron acceptor for the enzyme in this species is believed to be a menaquinone. Couples the redox reaction to proton translocation (for every two electrons transferred, four hydrogen ions are translocated across the cytoplasmic membrane), and thus conserves the redox energy in a proton gradient. This is NADH-quinone oxidoreductase subunit N from Cutibacterium acnes (strain DSM 16379 / KPA171202) (Propionibacterium acnes).